The following is a 380-amino-acid chain: tRNA-specific 2-thiouridylase MnmA (380 aa).

Residues 10-17 (AMSGGVDS) and Leu-36 contribute to the ATP site. The active-site Nucleophile is the Cys-106. A disulfide bond links Cys-106 and Cys-202. Residue Gly-130 coordinates ATP. The interval 152-154 (KNQ) is interaction with tRNA. The Cysteine persulfide intermediate role is filled by Cys-202. The tract at residues 308-309 (RY) is interaction with tRNA.

Belongs to the MnmA/TRMU family.

It is found in the cytoplasm. It catalyses the reaction S-sulfanyl-L-cysteinyl-[protein] + uridine(34) in tRNA + AH2 + ATP = 2-thiouridine(34) in tRNA + L-cysteinyl-[protein] + A + AMP + diphosphate + H(+). Functionally, catalyzes the 2-thiolation of uridine at the wobble position (U34) of tRNA, leading to the formation of s(2)U34. In Leptospira biflexa serovar Patoc (strain Patoc 1 / Ames), this protein is tRNA-specific 2-thiouridylase MnmA.